The primary structure comprises 617 residues: DNA mismatch repair protein MutL (617 aa).

Belongs to the DNA mismatch repair MutL/HexB family.

Functionally, this protein is involved in the repair of mismatches in DNA. It is required for dam-dependent methyl-directed DNA mismatch repair. May act as a 'molecular matchmaker', a protein that promotes the formation of a stable complex between two or more DNA-binding proteins in an ATP-dependent manner without itself being part of a final effector complex. The protein is DNA mismatch repair protein MutL of Bartonella tribocorum (strain CIP 105476 / IBS 506).